The following is an 806-amino-acid chain: Facilitated trehalose transporter Tret1 (806 aa).

Disordered regions lie at residues 1 to 34 (MFGN…TTGT) and 48 to 138 (LNST…HKNQ). The Cytoplasmic segment spans residues 1–339 (MFGNEMDDTR…LEVYRPTTNP (339 aa)). The span at 25–34 (GSLSTSTTGT) shows a compositional bias: low complexity. Residues 340–360 (IFIWTQVLAALSVSLGSMVVG) form a helical membrane-spanning segment. Topologically, residues 361–389 (FSSAYTSPALVSMKDRNITSFEVTDQSGS) are extracellular. Asparagine 377 carries N-linked (GlcNAc...) asparagine glycosylation. The helical transmembrane segment at 390–410 (WVGGIMPLAGLAGGILGGPLI) threads the bilayer. The Cytoplasmic portion of the chain corresponds to 411–424 (EYLGRKNTILATAT). A helical membrane pass occupies residues 425–445 (PFIISWLLIACATHVAMVLVG). The Extracellular portion of the chain corresponds to 446-447 (RA). A helical transmembrane segment spans residues 448-468 (LSGFSVGVASLSLPVYLGETV). Residues 469–473 (QPEVR) lie on the Cytoplasmic side of the membrane. A helical transmembrane segment spans residues 474–494 (GTLGLLPTAFGNIGILLCFVA). Topologically, residues 495–501 (GKYMDWS) are extracellular. The chain crosses the membrane as a helical span at residues 502 to 522 (GLAFLGAALPIPFLLLMFLIP). At 523–585 (ETPRWYVSRG…DLMKKANLKP (63 aa)) the chain is on the cytoplasmic side. Residues 586–606 (LLISLGLMFFQQLSGINAVIF) form a helical membrane-spanning segment. Topologically, residues 607-622 (YTVQIFQDAGSTIDEN) are extracellular. A helical transmembrane segment spans residues 623 to 643 (LCTIIVGVVNFIATFIATMLI). The Cytoplasmic portion of the chain corresponds to 644–649 (DRLGRK). The helical transmembrane segment at 650–670 (MLLYISDVAMIITLMTLGGFF) threads the bilayer. Topologically, residues 671 to 681 (YVKNSGQDVSQ) are extracellular. Residues 682 to 702 (VGWLPLAAFVIYVLGFSLGFG) traverse the membrane as a helical segment. Residues 703–723 (PIPWLMMGEILPGKIRGSAAS) are Cytoplasmic-facing. The chain crosses the membrane as a helical span at residues 724–744 (VATAFNWSCTFIVTKTFADII). At 745 to 750 (NAIGTH) the chain is on the extracellular side. The chain crosses the membrane as a helical span at residues 751 to 771 (GTFWMFGSICVIGLAFVIFYV). Over 772–806 (PETQGKSLEDIERKMMGRVRRMSSVANIKPLSFNM) the chain is Cytoplasmic.

The protein belongs to the major facilitator superfamily. Sugar transporter (TC 2.A.1.1) family. Trehalose transporter subfamily.

It localises to the cell membrane. High-capacity facilitative transporter for trehalose. Does not transport maltose, sucrose or lactose. Mediates the bidirectional transfer of trehalose. Responsible for the transport of trehalose synthesized in the fat body and the incorporation of trehalose into other tissues that require a carbon source, thereby regulating trehalose levels in the hemolymph. This is Facilitated trehalose transporter Tret1 from Aedes aegypti (Yellowfever mosquito).